A 504-amino-acid chain; its full sequence is Histidine ammonia-lyase (504 aa).

The 5-imidazolinone (Ala-Gly) cross-link spans 142 to 144 (ASG). Ser143 bears the 2,3-didehydroalanine (Ser) mark.

The protein belongs to the PAL/histidase family. Contains an active site 4-methylidene-imidazol-5-one (MIO), which is formed autocatalytically by cyclization and dehydration of residues Ala-Ser-Gly.

The protein localises to the cytoplasm. The enzyme catalyses L-histidine = trans-urocanate + NH4(+). The protein operates within amino-acid degradation; L-histidine degradation into L-glutamate; N-formimidoyl-L-glutamate from L-histidine: step 1/3. This Staphylococcus aureus (strain JH1) protein is Histidine ammonia-lyase.